Consider the following 190-residue polypeptide: Putative glutathione-dependent formaldehyde-activating enzyme (190 aa).

One can recognise a CENP-V/GFA domain in the interval 19 to 165 (FKGGKLYCHC…FRKEGLQTYD (147 aa)). Zn(2+)-binding residues include Cys-26, Cys-28, Cys-47, Cys-49, Cys-52, Cys-94, and Cys-97.

This sequence belongs to the Gfa family. The cofactor is Zn(2+).

It catalyses the reaction S-(hydroxymethyl)glutathione = glutathione + formaldehyde. It participates in one-carbon metabolism; formaldehyde degradation; formate from formaldehyde (glutathione route): step 1/3. In terms of biological role, catalyzes the condensation of formaldehyde and glutathione to S-hydroxymethylglutathione. This is Putative glutathione-dependent formaldehyde-activating enzyme from Phaeosphaeria nodorum (strain SN15 / ATCC MYA-4574 / FGSC 10173) (Glume blotch fungus).